The sequence spans 429 residues: Tubby-like F-box protein 5 (429 aa).

In terms of domain architecture, F-box spans 53 to 108; it reads TRWANLPAALLRDVMKKLDESESTWPARKQVVACAGVCKTWRLMCKDIVKSPEFSG. Residues 360 to 385 are disordered; sequence QPGSGSDGGALATRPSLSPQQPEQSN. Positions 374–383 are enriched in polar residues; it reads PSLSPQQPEQ.

Belongs to the TUB family. As to expression, mostly expressed in roots, flowers and siliques.

The chain is Tubby-like F-box protein 5 from Arabidopsis thaliana (Mouse-ear cress).